The chain runs to 216 residues: Uracil phosphoribosyltransferase (216 aa).

5-phospho-alpha-D-ribose 1-diphosphate-binding positions include arginine 85, arginine 110, and 135 to 143 (DPMVATGYS). Residues isoleucine 200 and 205 to 207 (GDA) each bind uracil. Aspartate 206 is a binding site for 5-phospho-alpha-D-ribose 1-diphosphate.

Belongs to the UPRTase family. Requires Mg(2+) as cofactor.

It catalyses the reaction UMP + diphosphate = 5-phospho-alpha-D-ribose 1-diphosphate + uracil. The protein operates within pyrimidine metabolism; UMP biosynthesis via salvage pathway; UMP from uracil: step 1/1. Allosterically activated by GTP. Catalyzes the conversion of uracil and 5-phospho-alpha-D-ribose 1-diphosphate (PRPP) to UMP and diphosphate. The sequence is that of Uracil phosphoribosyltransferase from Burkholderia pseudomallei (strain 668).